We begin with the raw amino-acid sequence, 227 residues long: Phosphoribosylformylglycinamidine synthase subunit PurQ (227 aa).

The region spanning 3-225 is the Glutamine amidotransferase type-1 domain; that stretch reads FAVIVFPGSN…LKQWRETYVV (223 aa). Cys-86 serves as the catalytic Nucleophile. Residues His-194 and Glu-196 contribute to the active site.

Part of the FGAM synthase complex composed of 1 PurL, 1 PurQ and 2 PurS subunits.

Its subcellular location is the cytoplasm. The enzyme catalyses N(2)-formyl-N(1)-(5-phospho-beta-D-ribosyl)glycinamide + L-glutamine + ATP + H2O = 2-formamido-N(1)-(5-O-phospho-beta-D-ribosyl)acetamidine + L-glutamate + ADP + phosphate + H(+). It catalyses the reaction L-glutamine + H2O = L-glutamate + NH4(+). The protein operates within purine metabolism; IMP biosynthesis via de novo pathway; 5-amino-1-(5-phospho-D-ribosyl)imidazole from N(2)-formyl-N(1)-(5-phospho-D-ribosyl)glycinamide: step 1/2. Part of the phosphoribosylformylglycinamidine synthase complex involved in the purines biosynthetic pathway. Catalyzes the ATP-dependent conversion of formylglycinamide ribonucleotide (FGAR) and glutamine to yield formylglycinamidine ribonucleotide (FGAM) and glutamate. The FGAM synthase complex is composed of three subunits. PurQ produces an ammonia molecule by converting glutamine to glutamate. PurL transfers the ammonia molecule to FGAR to form FGAM in an ATP-dependent manner. PurS interacts with PurQ and PurL and is thought to assist in the transfer of the ammonia molecule from PurQ to PurL. The protein is Phosphoribosylformylglycinamidine synthase subunit PurQ of Bacillus cereus (strain B4264).